The primary structure comprises 195 residues: dTTP/UTP pyrophosphatase (195 aa).

Catalysis depends on Asp-76, which acts as the Proton acceptor.

Belongs to the Maf family. YhdE subfamily. A divalent metal cation serves as cofactor.

It localises to the cytoplasm. The enzyme catalyses dTTP + H2O = dTMP + diphosphate + H(+). The catalysed reaction is UTP + H2O = UMP + diphosphate + H(+). Nucleoside triphosphate pyrophosphatase that hydrolyzes dTTP and UTP. May have a dual role in cell division arrest and in preventing the incorporation of modified nucleotides into cellular nucleic acids. This Shewanella frigidimarina (strain NCIMB 400) protein is dTTP/UTP pyrophosphatase.